A 251-amino-acid polypeptide reads, in one-letter code: Hydroxyacylglutathione hydrolase (251 aa).

Zn(2+) is bound by residues histidine 53, histidine 55, aspartate 57, histidine 58, histidine 110, aspartate 127, and histidine 165.

It belongs to the metallo-beta-lactamase superfamily. Glyoxalase II family. In terms of assembly, monomer. Requires Zn(2+) as cofactor.

The catalysed reaction is an S-(2-hydroxyacyl)glutathione + H2O = a 2-hydroxy carboxylate + glutathione + H(+). The protein operates within secondary metabolite metabolism; methylglyoxal degradation; (R)-lactate from methylglyoxal: step 2/2. In terms of biological role, thiolesterase that catalyzes the hydrolysis of S-D-lactoyl-glutathione to form glutathione and D-lactic acid. In Salmonella paratyphi C (strain RKS4594), this protein is Hydroxyacylglutathione hydrolase.